The chain runs to 61 residues: MAKKSMIIKQQREPKFAVRAYTRCERCGRPHSVLRKFKLCRICFRELAYKGQIPGVKKASW.

4 residues coordinate Zn(2+): Cys-24, Cys-27, Cys-40, and Cys-43.

This sequence belongs to the universal ribosomal protein uS14 family. Zinc-binding uS14 subfamily. As to quaternary structure, part of the 30S ribosomal subunit. Contacts proteins S3 and S10. Requires Zn(2+) as cofactor.

In terms of biological role, binds 16S rRNA, required for the assembly of 30S particles and may also be responsible for determining the conformation of the 16S rRNA at the A site. The chain is Small ribosomal subunit protein uS14 from Brevibacillus brevis (strain 47 / JCM 6285 / NBRC 100599).